The sequence spans 513 residues: ATP synthase subunit alpha (513 aa).

169–176 (GDRQTGKT) contacts ATP.

It belongs to the ATPase alpha/beta chains family. F-type ATPases have 2 components, CF(1) - the catalytic core - and CF(0) - the membrane proton channel. CF(1) has five subunits: alpha(3), beta(3), gamma(1), delta(1), epsilon(1). CF(0) has three main subunits: a(1), b(2) and c(9-12). The alpha and beta chains form an alternating ring which encloses part of the gamma chain. CF(1) is attached to CF(0) by a central stalk formed by the gamma and epsilon chains, while a peripheral stalk is formed by the delta and b chains.

It localises to the cell inner membrane. It catalyses the reaction ATP + H2O + 4 H(+)(in) = ADP + phosphate + 5 H(+)(out). In terms of biological role, produces ATP from ADP in the presence of a proton gradient across the membrane. The alpha chain is a regulatory subunit. In Cupriavidus metallidurans (strain ATCC 43123 / DSM 2839 / NBRC 102507 / CH34) (Ralstonia metallidurans), this protein is ATP synthase subunit alpha.